Reading from the N-terminus, the 343-residue chain is Phosphate acyltransferase (343 aa).

This sequence belongs to the PlsX family. As to quaternary structure, homodimer. Probably interacts with PlsY.

The protein localises to the cytoplasm. The enzyme catalyses a fatty acyl-[ACP] + phosphate = an acyl phosphate + holo-[ACP]. It functions in the pathway lipid metabolism; phospholipid metabolism. In terms of biological role, catalyzes the reversible formation of acyl-phosphate (acyl-PO(4)) from acyl-[acyl-carrier-protein] (acyl-ACP). This enzyme utilizes acyl-ACP as fatty acyl donor, but not acyl-CoA. The sequence is that of Phosphate acyltransferase from Acidovorax sp. (strain JS42).